Consider the following 148-residue polypeptide: Macrodomain Ter protein (148 aa).

It belongs to the MatP family. Homodimer.

It localises to the cytoplasm. Required for spatial organization of the terminus region of the chromosome (Ter macrodomain) during the cell cycle. Prevents early segregation of duplicated Ter macrodomains during cell division. Binds specifically to matS, which is a 13 bp signature motif repeated within the Ter macrodomain. In Haemophilus influenzae (strain PittGG), this protein is Macrodomain Ter protein.